We begin with the raw amino-acid sequence, 182 residues long: Isopentenyl-diphosphate Delta-isomerase (182 aa).

H25 and H32 together coordinate Mn(2+). Residues 30–164 form the Nudix hydrolase domain; sequence PLHLAFSCWL…PWAFSPWMVM (135 aa). C67 is an active-site residue. Residue H69 participates in Mn(2+) binding. E87 is a Mg(2+) binding site. Positions 114 and 116 each coordinate Mn(2+). The active site involves E116.

The protein belongs to the IPP isomerase type 1 family. Homodimer. Mg(2+) serves as cofactor. The cofactor is Mn(2+).

The protein localises to the cytoplasm. The enzyme catalyses isopentenyl diphosphate = dimethylallyl diphosphate. Its pathway is isoprenoid biosynthesis; dimethylallyl diphosphate biosynthesis; dimethylallyl diphosphate from isopentenyl diphosphate: step 1/1. In terms of biological role, catalyzes the 1,3-allylic rearrangement of the homoallylic substrate isopentenyl (IPP) to its highly electrophilic allylic isomer, dimethylallyl diphosphate (DMAPP). The polypeptide is Isopentenyl-diphosphate Delta-isomerase (Salmonella arizonae (strain ATCC BAA-731 / CDC346-86 / RSK2980)).